The sequence spans 288 residues: Bifunctional protein FolD (288 aa).

Residues G166–S168 and I232 each bind NADP(+).

It belongs to the tetrahydrofolate dehydrogenase/cyclohydrolase family. As to quaternary structure, homodimer.

The enzyme catalyses (6R)-5,10-methylene-5,6,7,8-tetrahydrofolate + NADP(+) = (6R)-5,10-methenyltetrahydrofolate + NADPH. It carries out the reaction (6R)-5,10-methenyltetrahydrofolate + H2O = (6R)-10-formyltetrahydrofolate + H(+). It functions in the pathway one-carbon metabolism; tetrahydrofolate interconversion. Catalyzes the oxidation of 5,10-methylenetetrahydrofolate to 5,10-methenyltetrahydrofolate and then the hydrolysis of 5,10-methenyltetrahydrofolate to 10-formyltetrahydrofolate. This Escherichia coli (strain SMS-3-5 / SECEC) protein is Bifunctional protein FolD.